Consider the following 359-residue polypeptide: 4-hydroxy-3-methylbut-2-en-1-yl diphosphate synthase (flavodoxin) (359 aa).

The [4Fe-4S] cluster site is built by C264, C267, C299, and E306.

It belongs to the IspG family. [4Fe-4S] cluster serves as cofactor.

The enzyme catalyses (2E)-4-hydroxy-3-methylbut-2-enyl diphosphate + oxidized [flavodoxin] + H2O + 2 H(+) = 2-C-methyl-D-erythritol 2,4-cyclic diphosphate + reduced [flavodoxin]. It functions in the pathway isoprenoid biosynthesis; isopentenyl diphosphate biosynthesis via DXP pathway; isopentenyl diphosphate from 1-deoxy-D-xylulose 5-phosphate: step 5/6. Converts 2C-methyl-D-erythritol 2,4-cyclodiphosphate (ME-2,4cPP) into 1-hydroxy-2-methyl-2-(E)-butenyl 4-diphosphate. The polypeptide is 4-hydroxy-3-methylbut-2-en-1-yl diphosphate synthase (flavodoxin) (Helicobacter pylori (strain ATCC 700392 / 26695) (Campylobacter pylori)).